Consider the following 150-residue polypeptide: D-aminoacyl-tRNA deacylase (150 aa).

The short motif at Gly136–Pro137 is the Gly-cisPro motif, important for rejection of L-amino acids element.

The protein belongs to the DTD family. In terms of assembly, homodimer.

The protein resides in the cytoplasm. The catalysed reaction is glycyl-tRNA(Ala) + H2O = tRNA(Ala) + glycine + H(+). It catalyses the reaction a D-aminoacyl-tRNA + H2O = a tRNA + a D-alpha-amino acid + H(+). Functionally, an aminoacyl-tRNA editing enzyme that deacylates mischarged D-aminoacyl-tRNAs. Also deacylates mischarged glycyl-tRNA(Ala), protecting cells against glycine mischarging by AlaRS. Acts via tRNA-based rather than protein-based catalysis; rejects L-amino acids rather than detecting D-amino acids in the active site. By recycling D-aminoacyl-tRNA to D-amino acids and free tRNA molecules, this enzyme counteracts the toxicity associated with the formation of D-aminoacyl-tRNA entities in vivo and helps enforce protein L-homochirality. This Staphylococcus epidermidis (strain ATCC 35984 / DSM 28319 / BCRC 17069 / CCUG 31568 / BM 3577 / RP62A) protein is D-aminoacyl-tRNA deacylase.